The primary structure comprises 730 residues: Catalase-peroxidase (730 aa).

The tryptophyl-tyrosyl-methioninium (Trp-Tyr) (with M-244) cross-link spans 95 to 218 (WHSAGTYRVG…LAAVQMGLIY (124 aa)). His96 (proton acceptor) is an active-site residue. The tryptophyl-tyrosyl-methioninium (Tyr-Met) (with W-95) cross-link spans 218 to 244 (YVNPEGPNGNPDPLGSAHDVRETFARM). His259 contributes to the heme b binding site.

This sequence belongs to the peroxidase family. Peroxidase/catalase subfamily. Homodimer or homotetramer. Requires heme b as cofactor. In terms of processing, formation of the three residue Trp-Tyr-Met cross-link is important for the catalase, but not the peroxidase activity of the enzyme.

The catalysed reaction is H2O2 + AH2 = A + 2 H2O. The enzyme catalyses 2 H2O2 = O2 + 2 H2O. Functionally, bifunctional enzyme with both catalase and broad-spectrum peroxidase activity. In Clostridium botulinum (strain Eklund 17B / Type B), this protein is Catalase-peroxidase.